Reading from the N-terminus, the 507-residue chain is ATP synthase subunit alpha (507 aa).

171–178 provides a ligand contact to ATP; that stretch reads GDRQTGKT.

Belongs to the ATPase alpha/beta chains family. As to quaternary structure, F-type ATPases have 2 components, CF(1) - the catalytic core - and CF(0) - the membrane proton channel. CF(1) has five subunits: alpha(3), beta(3), gamma(1), delta(1), epsilon(1). CF(0) has three main subunits: a(1), b(2) and c(9-12). The alpha and beta chains form an alternating ring which encloses part of the gamma chain. CF(1) is attached to CF(0) by a central stalk formed by the gamma and epsilon chains, while a peripheral stalk is formed by the delta and b chains.

Its subcellular location is the cell inner membrane. The catalysed reaction is ATP + H2O + 4 H(+)(in) = ADP + phosphate + 5 H(+)(out). Functionally, produces ATP from ADP in the presence of a proton gradient across the membrane. The alpha chain is a regulatory subunit. In Bdellovibrio bacteriovorus (strain ATCC 15356 / DSM 50701 / NCIMB 9529 / HD100), this protein is ATP synthase subunit alpha.